The sequence spans 479 residues: ATP-dependent RNA helicase DbpA (479 aa).

The Q motif motif lies at 2-30 (SHFKNYQISHDILRALEGLGYTEPTKVQQ). Residues 33–203 (IPAALERKDL…RQYMQNPEHI (171 aa)) form the Helicase ATP-binding domain. 46–53 (SQTGSGKT) contributes to the ATP binding site. The short motif at 151-154 (DEAD) is the DEAD box element. Residues 214-374 (NIEHAVIQVR…KIEAPSQEEV (161 aa)) form the Helicase C-terminal domain. The tract at residues 404 to 479 (MKLYFNGGKK…KQLKVNKANK (76 aa)) is involved in 23S rRNA binding.

The protein belongs to the DEAD box helicase family. DbpA subfamily. May interact with RNA helicases CshA and CshB.

Its subcellular location is the cytoplasm. It carries out the reaction ATP + H2O = ADP + phosphate + H(+). Its activity is regulated as follows. ATPase activity is stimulated by interaction with RNA. Functionally, DEAD-box RNA helicase involved in the assembly of the 50S ribosomal subunit. Has an RNA-dependent ATPase activity, which is specific for 23S rRNA, and a 3' to 5' RNA helicase activity that uses the energy of ATP hydrolysis to destabilize and unwind short rRNA duplexes. The chain is ATP-dependent RNA helicase DbpA from Bacillus subtilis (strain 168).